A 486-amino-acid chain; its full sequence is Malonate-semialdehyde dehydrogenase (486 aa).

Positions 154, 178, 181, 182, and 231 each coordinate NAD(+). Cys286 acts as the Nucleophile in catalysis. Residue Glu386 participates in NAD(+) binding.

Belongs to the aldehyde dehydrogenase family. IolA subfamily. As to quaternary structure, homotetramer.

The catalysed reaction is 3-oxopropanoate + NAD(+) + CoA + H2O = hydrogencarbonate + acetyl-CoA + NADH + H(+). It catalyses the reaction 2-methyl-3-oxopropanoate + NAD(+) + CoA + H2O = propanoyl-CoA + hydrogencarbonate + NADH + H(+). Its pathway is polyol metabolism; myo-inositol degradation into acetyl-CoA; acetyl-CoA from myo-inositol: step 7/7. In terms of biological role, catalyzes the oxidation of malonate semialdehyde (MSA) and methylmalonate semialdehyde (MMSA) into acetyl-CoA and propanoyl-CoA, respectively. Is involved in a myo-inositol catabolic pathway. Bicarbonate, and not CO2, is the end-product of the enzymatic reaction. The sequence is that of Malonate-semialdehyde dehydrogenase from Bacillus cereus (strain AH187).